A 151-amino-acid chain; its full sequence is UPF0719 transmembrane protein MAP_1032c (151 aa).

4 helical membrane passes run 20-40 (VATILYFAVGMAVLLVGFYAV), 60-80 (AVVVAGAMYIALTVVIITAIA), 90-110 (LVGVAVYGLMGVILLGVALLA), and 130-150 (PGSFAVALILLAVGGVTAAAV).

Belongs to the UPF0719 family.

Its subcellular location is the cell membrane. The protein is UPF0719 transmembrane protein MAP_1032c of Mycolicibacterium paratuberculosis (strain ATCC BAA-968 / K-10) (Mycobacterium paratuberculosis).